Here is a 299-residue protein sequence, read N- to C-terminus: Taste receptor type 2 member 19 (299 aa).

M1 is a topological domain (extracellular). A helical transmembrane segment spans residues 2–22 (MCFLLIISSILVVFAFVLGNV). The Cytoplasmic segment spans residues 23-55 (ANGFIALVNVIDWVNTRKISSAEQILTALVVSR). The helical transmembrane segment at 56–76 (IGLLWVMLFLWYATVFNSALY) threads the bilayer. At 77–87 (GLEVRIVASNA) the chain is on the extracellular side. A helical transmembrane segment spans residues 88–108 (WAVTNHFSMWLAASLSIFCLL). The Cytoplasmic portion of the chain corresponds to 109 to 127 (KIANFSNLISLHLKKRIKS). Residues 128-148 (VVLVILLGPLVFLICNLAVIT) traverse the membrane as a helical segment. At 149–181 (MDERVWTKEYEGNVTWKIKLRNAIHLSSLTVTT) the chain is on the extracellular side. A glycan (N-linked (GlcNAc...) asparagine) is linked at N161. The helical transmembrane segment at 182-202 (LANLIPFTLSLICFLLLICSL) threads the bilayer. The Cytoplasmic segment spans residues 203 to 226 (CKHLKKMRLHSKGSQDPSTKVHIK). A helical membrane pass occupies residues 227–247 (ALQTVTSFLMLFAIYFLCIIT). The Extracellular portion of the chain corresponds to 248-259 (STWNLRTQQSKL). A helical membrane pass occupies residues 260-280 (VLLLCQTVAIMYPSFHSFILI). The Cytoplasmic portion of the chain corresponds to 281–299 (MGSRKLKQTFLSVLWQMTR).

It belongs to the G-protein coupled receptor T2R family. In terms of tissue distribution, expressed in subsets of taste receptor cells of the tongue and exclusively in gustducin-positive cells.

It localises to the membrane. Receptor that may play a role in the perception of bitterness and is gustducin-linked. May play a role in sensing the chemical composition of the gastrointestinal content. The activity of this receptor may stimulate alpha gustducin, mediate PLC-beta-2 activation and lead to the gating of TRPM5. The protein is Taste receptor type 2 member 19 (TAS2R19) of Homo sapiens (Human).